The following is a 364-amino-acid chain: Fructose-bisphosphate aldolase B (364 aa).

A2 bears the N-acetylalanine mark. At K13 the chain carries N6-succinyllysine. Phosphoserine is present on S36. Position 39 is a phosphothreonine (T39). Residue R43 coordinates beta-D-fructose 1,6-bisphosphate. S89 bears the Phosphoserine mark. Position 119 is a phosphothreonine (T119). K121 is modified (N6-succinyllysine). A Phosphoserine modification is found at S132. The active-site Proton acceptor is the E188. At S206 the chain carries Phosphoserine. K230 functions as the Schiff-base intermediate with dihydroxyacetone-P in the catalytic mechanism. Phosphoserine is present on residues S272, S276, S299, and S301. 272–274 (SGG) is a binding site for beta-D-fructose 1,6-bisphosphate. R304 is a beta-D-fructose 1,6-bisphosphate binding site. Residue S309 is modified to Phosphoserine. K317 carries the post-translational modification N6-succinyllysine.

It belongs to the class I fructose-bisphosphate aldolase family. As to quaternary structure, homotetramer. Interacts with BBS1, BBS2, BBS4 and BBS7. Forms a ternary complex with G6PD and TP53; this interaction is direct.

It is found in the cytoplasm. Its subcellular location is the cytosol. The protein resides in the cytoskeleton. The protein localises to the microtubule organizing center. It localises to the centrosome. It is found in the centriolar satellite. It carries out the reaction beta-D-fructose 1,6-bisphosphate = D-glyceraldehyde 3-phosphate + dihydroxyacetone phosphate. It catalyses the reaction beta-D-fructose 1-phosphate = D-glyceraldehyde + dihydroxyacetone phosphate. Its pathway is carbohydrate degradation; glycolysis; D-glyceraldehyde 3-phosphate and glycerone phosphate from D-glucose: step 4/4. The protein operates within carbohydrate biosynthesis; gluconeogenesis. It participates in carbohydrate metabolism; fructose metabolism. Its function is as follows. Catalyzes the aldol cleavage of fructose 1,6-biphosphate to form two triosephosphates dihydroxyacetone phosphate and D-glyceraldehyde 3-phosphate in glycolysis as well as the reverse stereospecific aldol addition reaction in gluconeogenesis. In fructolysis, metabolizes fructose 1-phosphate derived from the phosphorylation of dietary fructose by fructokinase into dihydroxyacetone phosphate and D-glyceraldehyde. Acts as an adapter independently of its enzymatic activity, exerts a tumor suppressor role by stabilizing the ternary complex with G6PD and TP53 to inhibit G6PD activity and keep oxidative pentose phosphate metabolism in check. The polypeptide is Fructose-bisphosphate aldolase B (Mus musculus (Mouse)).